Consider the following 365-residue polypeptide: Casein kinase I homolog hhp1 (365 aa).

One can recognise a Protein kinase domain in the interval 11–279; the sequence is YRIGRKIGSG…YLRKLFRDLF (269 aa). ATP is bound by residues 17 to 25 and Lys-40; that span reads IGSGSFGDI. Residue Asp-130 is the Proton acceptor of the active site. Positions 301–311 are enriched in low complexity; that stretch reads DQQHQQQLQQQ. Residues 301-365 form a disordered region; sequence DQQHQQQLQQ…TGAQYINRPN (65 aa). The segment covering 343–365 has biased composition (polar residues); the sequence is INTTVPVINDPSATGAQYINRPN.

Belongs to the protein kinase superfamily. CK1 Ser/Thr protein kinase family. Casein kinase I subfamily.

It is found in the nucleus. The catalysed reaction is L-seryl-[protein] + ATP = O-phospho-L-seryl-[protein] + ADP + H(+). It catalyses the reaction L-threonyl-[protein] + ATP = O-phospho-L-threonyl-[protein] + ADP + H(+). Its function is as follows. Involved in DNA repair. Has a probable role in repairing alkylated DNA and may regulate the activity of protein(s) involved in double strand break repair caused by gamma rays. The chain is Casein kinase I homolog hhp1 (hhp1) from Schizosaccharomyces pombe (strain 972 / ATCC 24843) (Fission yeast).